Reading from the N-terminus, the 341-residue chain is HTH-type transcriptional repressor PurR (341 aa).

The HTH lacI-type domain maps to 2-56 (ATIKDVAKRANVSTTTVSHVINKTRFVAEETRNAVWAAIKELHYSPSAVARSLKV). Positions 4–23 (IKDVAKRANVSTTTVSHVIN) form a DNA-binding region, H-T-H motif. The DNA-binding element occupies 48–56 (SAVARSLKV). Residues Tyr73, Arg190, Thr192, Phe221, and Asp275 each contribute to the hypoxanthine site.

Homodimer.

It functions in the pathway purine metabolism; purine nucleotide biosynthesis [regulation]. In terms of biological role, is the main repressor of the genes involved in the de novo synthesis of purine nucleotides, regulating purB, purC, purEK, purF, purHD, purL, purMN and guaBA expression. PurR is allosterically activated to bind its cognate DNA by binding the purine corepressors, hypoxanthine or guanine, thereby effecting transcription repression. The protein is HTH-type transcriptional repressor PurR of Escherichia fergusonii (strain ATCC 35469 / DSM 13698 / CCUG 18766 / IAM 14443 / JCM 21226 / LMG 7866 / NBRC 102419 / NCTC 12128 / CDC 0568-73).